Reading from the N-terminus, the 339-residue chain is NADP-dependent dehydrogenase M3 (339 aa).

Serine 49, isoleucine 51, aspartate 93, tyrosine 206, lysine 210, isoleucine 240, and glutamine 244 together coordinate NADP(+). Tyrosine 206 (proton acceptor) is an active-site residue. Lysine 210 (lowers pKa of active site Tyr) is an active-site residue.

Belongs to the short-chain dehydrogenases/reductases (SDR) family. In terms of assembly, homodimer.

It is found in the cytoplasm. It localises to the cytosol. The protein operates within secondary metabolite biosynthesis. Functionally, NADP-dependent dehydrogenase; part of the gene cluster that mediates the biosynthesis of squalestatin S1 (SQS1, also known as zaragozic acid A), a heavily oxidized fungal polyketide that offers potent cholesterol lowering activity by targeting squalene synthase (SS). SQS1 is composed of a 2,8-dioxobicyclic[3.2.1]octane-3,4,5-tricarboxyclic acid core that is connected to two lipophilic polyketide arms. These initial steps feature the priming of an unusual benzoic acid starter unit onto the highly reducing polyketide synthase pks2, followed by oxaloacetate extension and product release to generate a tricarboxylic acid containing product. The phenylalanine ammonia lyase (PAL) M7 and the acyl-CoA ligase M9 are involved in transforming phenylalanine into benzoyl-CoA. The citrate synthase-like protein R3 is involved in connecting the C-alpha-carbons of the hexaketide chain and oxaloacetate to afford the tricarboxylic acid unit. The potential hydrolytic enzymes, M8 and M10, are in close proximity to pks2 and may participate in product release. On the other side, the tetraketide arm is synthesized by a the squalestatin tetraketide synthase pks1 and enzymatically esterified to the core in the last biosynthetic step, by the acetyltransferase M4. The biosynthesis of the tetraketide must involve 3 rounds of chain extension. After the first and second rounds methyl-transfer occurs, and in all rounds of extension the ketoreductase and dehydratase are active. The enoyl reductase and C-MeT of pks1 are not active in the final round of extension. The acetyltransferase M4 appears to have a broad substrate selectivity for its acyl CoA substrate, allowing the in vitro synthesis of novel squalestatins. The biosynthesis of SQS1 requires several oxidative steps likely performed by oxidoreductases M1, R1 and R2. Finally, in support of the identification of the cluster as being responsible for SQS1 production, the cluster contains a gene encoding a putative squalene synthase (SS) R6, suggesting a likely mechanism for self-resistance. The chain is NADP-dependent dehydrogenase M3 from Phoma sp. (strain ATCC 20986 / MF5453).